The chain runs to 180 residues: Adenine phosphoribosyltransferase (180 aa).

The protein belongs to the purine/pyrimidine phosphoribosyltransferase family. As to quaternary structure, homodimer.

The protein localises to the cytoplasm. The enzyme catalyses AMP + diphosphate = 5-phospho-alpha-D-ribose 1-diphosphate + adenine. It functions in the pathway purine metabolism; AMP biosynthesis via salvage pathway; AMP from adenine: step 1/1. In terms of biological role, catalyzes a salvage reaction resulting in the formation of AMP, that is energically less costly than de novo synthesis. The sequence is that of Adenine phosphoribosyltransferase from Pasteurella multocida (strain Pm70).